The chain runs to 58 residues: MLRWALIFFIIAIIAAVFGFGGIATAAAGIAKVLFYLFLVVAVVMLVSALLAGRNLTR.

Transmembrane regions (helical) follow at residues 4–24 (WALI…GGIA) and 33–53 (VLFY…LLAG).

It belongs to the UPF0391 family.

The protein localises to the cell membrane. The sequence is that of UPF0391 membrane protein GM21_0108 from Geobacter sp. (strain M21).